The sequence spans 577 residues: Acyl-coenzyme A synthetase ACSM2A, mitochondrial (577 aa).

The transit peptide at 1–46 (MHWLRKVQGLCTLWGTQMSSRTLYINSRQLVSLQWGHQEVPAKFNF) directs the protein to the mitochondrion. Q139 is a binding site for CoA. ATP contacts are provided by residues 221–229 (TSGTSGLPK), 359–364 (ESYGQT), D446, and R461. Residue T364 participates in substrate binding. 469–471 (SGY) serves as a coordination point for CoA. R472 lines the substrate pocket. R501 provides a ligand contact to CoA. At S513 the chain carries Phosphoserine. Residues K532 and 540-542 (YPR) each bind CoA. K557 contributes to the ATP binding site.

The protein belongs to the ATP-dependent AMP-binding enzyme family. In terms of assembly, monomer. The cofactor is Mg(2+). It depends on Mn(2+) as a cofactor.

It is found in the mitochondrion. It carries out the reaction a medium-chain fatty acid + ATP + CoA = a medium-chain fatty acyl-CoA + AMP + diphosphate. It catalyses the reaction benzoate + ATP + CoA = benzoyl-CoA + AMP + diphosphate. The catalysed reaction is hexanoate + ATP + CoA = hexanoyl-CoA + AMP + diphosphate. The enzyme catalyses butanoate + ATP + CoA = butanoyl-CoA + AMP + diphosphate. It carries out the reaction octanoate + ATP + CoA = octanoyl-CoA + AMP + diphosphate. It catalyses the reaction decanoate + ATP + CoA = decanoyl-CoA + AMP + diphosphate. Catalyzes the activation of fatty acids by CoA to produce an acyl-CoA, the first step in fatty acid metabolism. Capable of activating medium-chain fatty acids (e.g. butyric (C4) to decanoic (C10) acids), and certain carboxylate-containing xenobiotics, e.g. benzoate. The polypeptide is Acyl-coenzyme A synthetase ACSM2A, mitochondrial (ACSM2A) (Homo sapiens (Human)).